A 323-amino-acid chain; its full sequence is tRNA dimethylallyltransferase (323 aa).

12-19 (GPTAAGKT) lines the ATP pocket. 14–19 (TAAGKT) is a binding site for substrate. Interaction with substrate tRNA regions lie at residues 37 to 40 (DSAL) and 161 to 165 (QRLMR).

It belongs to the IPP transferase family. Monomer. The cofactor is Mg(2+).

The catalysed reaction is adenosine(37) in tRNA + dimethylallyl diphosphate = N(6)-dimethylallyladenosine(37) in tRNA + diphosphate. In terms of biological role, catalyzes the transfer of a dimethylallyl group onto the adenine at position 37 in tRNAs that read codons beginning with uridine, leading to the formation of N6-(dimethylallyl)adenosine (i(6)A). This Pseudomonas aeruginosa (strain UCBPP-PA14) protein is tRNA dimethylallyltransferase.